The sequence spans 221 residues: Ubiquitin-conjugating enzyme E2 S (221 aa).

Residues Gln11–Met157 form the UBC core domain. The active-site Glycyl thioester intermediate is the Cys95. A disordered region spans residues Gly158–Leu221. Over residues Gly193 to Ile206 the composition is skewed to low complexity. Over residues Ala208–Leu221 the composition is skewed to basic residues.

This sequence belongs to the ubiquitin-conjugating enzyme family.

The enzyme catalyses S-ubiquitinyl-[E1 ubiquitin-activating enzyme]-L-cysteine + [E2 ubiquitin-conjugating enzyme]-L-cysteine = [E1 ubiquitin-activating enzyme]-L-cysteine + S-ubiquitinyl-[E2 ubiquitin-conjugating enzyme]-L-cysteine.. It functions in the pathway protein modification; protein ubiquitination. Its function is as follows. Catalyzes the covalent attachment of ubiquitin to other proteins. Acts as an essential factor of the anaphase promoting complex/cyclosome (APC/C), a cell cycle-regulated ubiquitin ligase that controls progression through mitosis. Acts by specifically elongating 'Lys-11'-linked polyubiquitin chains initiated by the E2 enzyme ube2c/ubch10 on APC/C substrates, enhancing the degradation of APC/C substrates by the proteasome and promoting mitotic exit. This is Ubiquitin-conjugating enzyme E2 S (ube2s) from Danio rerio (Zebrafish).